Here is a 524-residue protein sequence, read N- to C-terminus: CTP synthase (524 aa).

Residues 1–263 are amidoligase domain; it reads MKKYVIVTGG…HEKIASKLNV (263 aa). Ser-13 is a binding site for CTP. Ser-13 contacts UTP. ATP contacts are provided by residues 14-19 and Asp-71; that span reads GIGKGI. Positions 71 and 137 each coordinate Mg(2+). Residues 144–146, 184–189, and Lys-220 each bind CTP; these read DIE and KTKPTQ. Residues 184–189 and Lys-220 each bind UTP; that span reads KTKPTQ. The Glutamine amidotransferase type-1 domain maps to 282 to 524; sequence RIALVGKYLG…YLRKVLEGSQ (243 aa). Gly-342 serves as a coordination point for L-glutamine. Residue Cys-369 is the Nucleophile; for glutamine hydrolysis of the active site. Residues 370 to 373, Glu-393, and Arg-451 each bind L-glutamine; that span reads LGMQ. Active-site residues include His-499 and Glu-501.

Belongs to the CTP synthase family. As to quaternary structure, homotetramer.

It catalyses the reaction UTP + L-glutamine + ATP + H2O = CTP + L-glutamate + ADP + phosphate + 2 H(+). It carries out the reaction L-glutamine + H2O = L-glutamate + NH4(+). The enzyme catalyses UTP + NH4(+) + ATP = CTP + ADP + phosphate + 2 H(+). Its pathway is pyrimidine metabolism; CTP biosynthesis via de novo pathway; CTP from UDP: step 2/2. Allosterically activated by GTP, when glutamine is the substrate; GTP has no effect on the reaction when ammonia is the substrate. The allosteric effector GTP functions by stabilizing the protein conformation that binds the tetrahedral intermediate(s) formed during glutamine hydrolysis. Inhibited by the product CTP, via allosteric rather than competitive inhibition. Catalyzes the ATP-dependent amination of UTP to CTP with either L-glutamine or ammonia as the source of nitrogen. Regulates intracellular CTP levels through interactions with the four ribonucleotide triphosphates. This Thermotoga maritima (strain ATCC 43589 / DSM 3109 / JCM 10099 / NBRC 100826 / MSB8) protein is CTP synthase.